The sequence spans 316 residues: Succinoglycan biosynthesis protein ExoV (316 aa).

Its pathway is glycan metabolism; exopolysaccharide biosynthesis. The chain is Succinoglycan biosynthesis protein ExoV (exoV) from Rhizobium meliloti (strain 1021) (Ensifer meliloti).